Reading from the N-terminus, the 66-residue chain is MPKMKTKSAAKKRFSMTATGKVKAGPAGKRHGMIKRSTKFIRDVTGTMILSDADAKIVKKYMPYNR.

The span at 1–14 (MPKMKTKSAAKKRF) shows a compositional bias: basic residues. Residues 1–34 (MPKMKTKSAAKKRFSMTATGKVKAGPAGKRHGMI) form a disordered region.

This sequence belongs to the bacterial ribosomal protein bL35 family.

The polypeptide is Large ribosomal subunit protein bL35 (Paracoccus denitrificans (strain Pd 1222)).